Reading from the N-terminus, the 861-residue chain is MNLGTRYSPEQIEKKWYERWVEKGYFAPKGSGIPFVIVIPPPNITGRIHMGHALNITLQDILVRYKRMRGFDTLWVPGEDHAGIATQNAVERYLESQGKSREQLGREKFIEIVWEWAKKYRKEIRQQIETLGASVDWSRERFTLDDGLSKAVRKVFVDLYNRGLIYRGKYMVNWCPRCQTVLSDEEVEHIEESAKLYYVKYPFSGSNEYIVIATTRPETMLGDVAVAVNPEDERYKNISGKTVVLPLMNREIPIITDSYVDPEFGTGAVKITPAHDPNDFDIAKRHSLQFIEIFDNEAKINENGGKYAGLDRYQARKAVLEDLEKAGFLLKVENINHAVGHCYRCDSVIEPRIMDQWFVSMKSLSKRAIEAVENEEIRFVPERWKKVYLHWMYNIRDWCISRQLWWGHRVPVWYCKNCNETIVSEIDIEECPKCGSKSIEQDEDVLDTWFSSALWPFSTLGWPEKTEDLEKYYPTSVLVTGFDIIFFWVARMIIMGYQFMQKKPFTDVYIHQLIRDKHGRKMSKSLGNGIDPIDMSEKYGTDPVRFTLAIFAAQGSDIKLDERYFDTYRKFANKIWNAARFVLINLDNYKPQPLNELSLADRWILSKLQKVISVVSDAIEKYEFNIAARSLYEFFWNEFCDWYIESSKLVLNSEKKAITQNVLVKVLDTSLRLLHPFMPFLSEELWQNLPVHGESIVISDWPEVDVTLINEEAEKNFEKLVQIIRGIRNVKAEMNIPPKRNTKVYIYGETLCKEESSYIEHLSGAQISYVKEKPACCATAFVSENQHVYVDVAGLNLQSEIKRLMKNIEKLQKEREWQLKKLSDDKFLSNAPEEAISEARQKLSEIEDRLKILNQILGDLM.

The 'HIGH' region signature appears at 42–52; that stretch reads PNITGRIHMGH. Positions 521 to 525 match the 'KMSKS' region motif; sequence KMSKS. Residue Lys-524 participates in ATP binding. Positions 792 to 861 form a coiled coil; that stretch reads VAGLNLQSEI…ILNQILGDLM (70 aa).

Belongs to the class-I aminoacyl-tRNA synthetase family. ValS type 1 subfamily. Monomer.

The protein resides in the cytoplasm. It carries out the reaction tRNA(Val) + L-valine + ATP = L-valyl-tRNA(Val) + AMP + diphosphate. Functionally, catalyzes the attachment of valine to tRNA(Val). As ValRS can inadvertently accommodate and process structurally similar amino acids such as threonine, to avoid such errors, it has a 'posttransfer' editing activity that hydrolyzes mischarged Thr-tRNA(Val) in a tRNA-dependent manner. The protein is Valine--tRNA ligase of Pseudothermotoga lettingae (strain ATCC BAA-301 / DSM 14385 / NBRC 107922 / TMO) (Thermotoga lettingae).